The chain runs to 153 residues: Ribosome maturation factor RimP (153 aa).

The protein belongs to the RimP family.

Its subcellular location is the cytoplasm. Functionally, required for maturation of 30S ribosomal subunits. The sequence is that of Ribosome maturation factor RimP from Marinobacter nauticus (strain ATCC 700491 / DSM 11845 / VT8) (Marinobacter aquaeolei).